The primary structure comprises 805 residues: Shutoff protein (805 aa).

The disordered stretch occupies residues 1–88 (MESVEKEDSL…QVGRGDQRHG (88 aa)). Polar residues predominate over residues 18 to 29 (TTASTDAANAPT). Composition is skewed to basic and acidic residues over residues 59 to 70 (RSVPTEDKKQDQ) and 79 to 88 (QVGRGDQRHG). The tract at residues 280–345 (VMSELIVRRA…AVLVTVELEC (66 aa)) is binding to host EIF4G. Positions 348 to 466 (RFFADPEMQR…DLWTAFNERS (119 aa)) constitute an RRM domain. Tyrosine 365 and tyrosine 682 each carry phosphotyrosine; by host. Residues 684 to 805 (DPQSGEELNP…AGTACSPTQP (122 aa)) are disordered. A compositionally biased stretch (gly residues) spans 726–742 (GRGGILGQSGRGGFGRG). Over residues 754 to 763 (RSFRGRRGVR) the composition is skewed to basic residues.

This sequence belongs to the adenoviridae shutoff protein family. In terms of assembly, monomer. Interacts with hexon protein; this interaction allows chaperoning and trimerization of hexon proteins. Interacts (via N-terminus) with host initiation factor EIF4G (via C-terminus). Interacts (via RRM domain) with viral mRNAs that contain the tripartite leader; this interaction allows ribosome shunting and expression of viral late mRNAs. Might be cleaved by the viral protease. In terms of processing, phosphorylated. Tyrosine phosphorylation enhances preferential binding to tripartite leader mRNAs and allows ribosome shunting. Post-translationally, methylated. Asymmetric dimethylation by host PRMT1 of the Arg/Gly-rich region may regulate shutoff protein binding to hexon and promote the capsid assembly in the nucleus.

It localises to the host cytoplasm. Its function is as follows. Protein that inhibits host translation while promoting late viral translation by ribosome shunting. Blocks host cap-dependent translation by binding to eIF4G, displacing MKNK1 from cap initiation complexes and preventing EIF4E phosphorylation. Binds to the tripartite leader sequence of viral late mRNAs and recruits host eIF4G, PABPC1/poly-A binding protein and 40S ribosomes subunits on viral mRNAs, allowing ribosome shunting and efficient translation of late viral mRNAs even though conventional translation via ribosome scanning from the cap has been shut off in the host cell. During assembly, acts as a chaperone protein that helps hexon proteins assembly into trimers. The protein is Shutoff protein of Homo sapiens (Human).